The following is a 155-amino-acid chain: Ribosome maturation factor RimP (155 aa).

This sequence belongs to the RimP family.

Its subcellular location is the cytoplasm. Required for maturation of 30S ribosomal subunits. The sequence is that of Ribosome maturation factor RimP from Synechococcus sp. (strain CC9605).